Reading from the N-terminus, the 246-residue chain is RNA polymerase sigma-B factor (246 aa).

The Polymerase core binding signature appears at 25 to 38 (DLIQEGNIGLMKAV). A DNA-binding region (H-T-H motif) is located at residues 201 to 220 (LKELGEHFGFSRERARQLEI).

Belongs to the sigma-70 factor family.

Its function is as follows. Sigma factors are initiation factors that promote the attachment of RNA polymerase to specific initiation sites and are then released. This sigma factor is essential for late-stage differentiation of M.xanthus. The polypeptide is RNA polymerase sigma-B factor (sigB) (Myxococcus xanthus).